We begin with the raw amino-acid sequence, 262 residues long: Tryptophan synthase alpha chain (262 aa).

Catalysis depends on proton acceptor residues glutamate 49 and aspartate 60.

It belongs to the TrpA family. In terms of assembly, tetramer of two alpha and two beta chains.

It carries out the reaction (1S,2R)-1-C-(indol-3-yl)glycerol 3-phosphate + L-serine = D-glyceraldehyde 3-phosphate + L-tryptophan + H2O. It participates in amino-acid biosynthesis; L-tryptophan biosynthesis; L-tryptophan from chorismate: step 5/5. The alpha subunit is responsible for the aldol cleavage of indoleglycerol phosphate to indole and glyceraldehyde 3-phosphate. The chain is Tryptophan synthase alpha chain from Aquifex aeolicus (strain VF5).